A 364-amino-acid chain; its full sequence is N-acetyl-gamma-glutamyl-phosphate reductase (364 aa).

The active site involves Cys157.

The protein belongs to the NAGSA dehydrogenase family. Type 1 subfamily.

It localises to the cytoplasm. The enzyme catalyses N-acetyl-L-glutamate 5-semialdehyde + phosphate + NADP(+) = N-acetyl-L-glutamyl 5-phosphate + NADPH + H(+). The protein operates within amino-acid biosynthesis; L-arginine biosynthesis; N(2)-acetyl-L-ornithine from L-glutamate: step 3/4. Its function is as follows. Catalyzes the NADPH-dependent reduction of N-acetyl-5-glutamyl phosphate to yield N-acetyl-L-glutamate 5-semialdehyde. This chain is N-acetyl-gamma-glutamyl-phosphate reductase, found in Bifidobacterium animalis subsp. lactis (strain AD011).